Reading from the N-terminus, the 224-residue chain is Pre-hexon-linking protein VIII (224 aa).

Thr-64 is modified (phosphothreonine; by host). Residues 112-154 constitute a propeptide that is removed on maturation; the sequence is RQPSPSHIDIKDTMLAGTGIQLGEDIPSVSWIRPDGIFQLGGG.

The protein belongs to the adenoviridae hexon-linking protein family. In terms of assembly, interacts with the peripentonal hexons as well as the hexons in the facets. Part of a complex composed of the core-capsid bridging protein, the endosome lysis protein VI and the hexon-linking protein VIII; these interactions bridge the virus core to the capsid. In terms of processing, cleaved by the viral protease during virion maturation. May cause the middle segment to be shed from the capsid.

The protein localises to the virion. It is found in the host nucleus. Functionally, structural component of the virion that acts as a cement protein on the capsid interior and which glue the peripentonal hexons and group-of-nine hexons together. This chain is Pre-hexon-linking protein VIII, found in Canine adenovirus serotype 1 (strain CLL) (CAdV-1).